Here is an 825-residue protein sequence, read N- to C-terminus: Extracellular exo-alpha-L-arabinofuranosidase (825 aa).

The first 29 residues, 1–29 (MSRIRWRYGTAATALLVAAGLVPTATAHA), serve as a signal peptide directing secretion. Glutamate 58 lines the alpha-L-arabinofuranose pocket. One can recognise a CBM-cenC domain in the interval 70-215 (AELVQNRSFE…ALDMVSLFPR (146 aa)). Alpha-L-arabinofuranose is bound by residues cysteine 247 and 379–380 (NE). Catalysis depends on glutamate 380, which acts as the Proton donor/acceptor.

This sequence belongs to the glycosyl hydrolase 51 family.

It is found in the secreted. The enzyme catalyses Hydrolysis of terminal non-reducing alpha-L-arabinofuranoside residues in alpha-L-arabinosides.. Involved in the degradation of arabinan and is a key enzyme in the complete degradation of the plant cell wall. Catalyzes the cleavage of terminal alpha-L-arabinofuranosyl residues of arabinan present in the arabinofuranosyl polysaccharides or oligosaccharides. It cannot act on other arabinose-containing polysaccharides and arabinoxylo-oligosaccharides. It leaves most of the polymer intact, including most of the main-chain residues and the arabinose side chains. It acts preferentially on the linear alpha-(1-&gt;2)-linked arabinofuranobiosides and alpha-(1-&gt;3)-linked arabinofuranobiosides, and is much less effective on alpha-(1-&gt;5)-linked arabinofuranobiosides. It also hydrolyzes the terminal alpha-(1-&gt;3)-linked arabinofuranotriosides in preference to the alpha-(1-&gt;5)-linked arabinofuranotriosides. In Streptomyces chartreusis, this protein is Extracellular exo-alpha-L-arabinofuranosidase.